The following is a 124-amino-acid chain: Fluoride-specific ion channel FluC (124 aa).

The next 4 membrane-spanning stretches (helical) occupy residues 4–24, 35–55, 70–90, and 95–115; these read ILFVALGGSIGAVFRYLISIF, FGTLLVNIIGSFLMGVIYALG, VGLLGALTTFSTFSNETLLLI, and WLKAFLNIALNLCLCIFMVYL. 2 residues coordinate Na(+): Gly-74 and Thr-77.

Belongs to the fluoride channel Fluc/FEX (TC 1.A.43) family.

The protein localises to the cell inner membrane. The catalysed reaction is fluoride(in) = fluoride(out). With respect to regulation, na(+) is not transported, but it plays an essential structural role and its presence is essential for fluoride channel function. In terms of biological role, fluoride-specific ion channel. Important for reducing fluoride concentration in the cell, thus reducing its toxicity. The polypeptide is Fluoride-specific ion channel FluC (Shewanella woodyi (strain ATCC 51908 / MS32)).